Reading from the N-terminus, the 361-residue chain is D-malate dehydrogenase [decarboxylating] (361 aa).

Mn(2+)-binding residues include D224, D248, and D252.

The protein belongs to the isocitrate and isopropylmalate dehydrogenases family. The cofactor is Mg(2+). Mn(2+) is required as a cofactor.

The protein localises to the cytoplasm. It carries out the reaction (R)-malate + NAD(+) = pyruvate + CO2 + NADH. Its function is as follows. Catalyzes the NAD(+)-dependent oxidative decarboxylation of D-malate into pyruvate. Is essential for aerobic growth on D-malate as the sole carbon source. But is not required for anaerobic D-malate utilization, although DmlA is expressed and active in those conditions. Appears to be not able to use L-tartrate as a substrate for dehydrogenation instead of D-malate. The sequence is that of D-malate dehydrogenase [decarboxylating] (dmlA) from Escherichia coli (strain K12).